We begin with the raw amino-acid sequence, 744 residues long: MTTATRFPQFSQDLASDPTTRRLWYGIATAHDFETHDGMTEERLYQKLFATHFGHLAIIFLWASGNVFHIAWQGNYEQWVANPTGVTPIAHAIWDPHFGKAAVEAFTQPGGGGPVNAAYSGLYYWFNTIGLRTNGDLYAGAIGLLLLAAVFLFAGWLHLQPRFRPSLSWFKNAEARLNHHLAGLFGVSSLAWTGHLVHVAIPESRGQHVGWDNFLTTLPHPAGLKPFFTLNWGVYAQNPDTANHVWGTAEGAGTAILTFLGGFNPNTQSLWLTDMAHHHLAIAVIFIVAGHMYRTNWGIGHSIREILGAHNPPKGTPFGGLLGEGHKGLYDTVNNSLHFQLALALACLGVVTSLVAQHMYALNPYVFMSMDHTTEAALYTHHQYIAGFLMVGAFAHGAIFLVRDYDPEANKNNVLARVLDHKEAIISHLSWVSLFLGFHTLGLYVHNDVMQAFGTPEKQILIEPVFAQFIQASHGKMIYGMDVLLSNPDSLASTAWPNYGNVWLPGWLQAINDPNGSLFLPIGPGDFLVHHAIALGLHTTTLILVKGALDARGSKLMPDKKDFGYSFPCDGPGRGGTCDISAWDAFYLAMFWMLNTIGWVTFYWHWKQLGVWSGNTAQFNENSTYLMGWLRDYLWANSAQLINGYNPYGMNNLAVWAWMFLFGHLVWATGFMFLISWRGYWQELIETLVWAHERTPLAKLIRWKDKPVAMSIVQGRLVGLAHFTVGYVLTYAAFVIASTASQSG.

The next 8 helical transmembrane spans lie at L48 to A71, L137 to Q160, L177 to I201, M275 to Y293, L337 to Y360, A376 to V402, A424 to H446, and F527 to V545. Residues C569 and C578 each coordinate [4Fe-4S] cluster. Transmembrane regions (helical) follow at residues A585–W606 and L653–I675. H664, M672, and Y680 together coordinate chlorophyll a. Phylloquinone is bound at residue W681. Residues L717–A737 form a helical membrane-spanning segment.

Belongs to the PsaA/PsaB family. The PsaA/B heterodimer binds the P700 chlorophyll special pair and subsequent electron acceptors. PSI consists of a core antenna complex that captures photons, and an electron transfer chain that converts photonic excitation into a charge separation. The cyanobacterial PSI reaction center is composed of one copy each of PsaA,B,C,D,E,F,I,J,K,L,M and X, and forms trimeric complexes. Requires PSI electron transfer chain: 5 chlorophyll a, 1 chlorophyll a', 2 phylloquinones and 3 4Fe-4S clusters. PSI core antenna: 90 chlorophyll a, 22 carotenoids, 3 phospholipids and 1 galactolipid. P700 is a chlorophyll a/chlorophyll a' dimer, A0 is one or more chlorophyll a, A1 is one or both phylloquinones and FX is a shared 4Fe-4S iron-sulfur center. as cofactor.

It localises to the cellular thylakoid membrane. It carries out the reaction reduced [plastocyanin] + hnu + oxidized [2Fe-2S]-[ferredoxin] = oxidized [plastocyanin] + reduced [2Fe-2S]-[ferredoxin]. Functionally, psaA and PsaB bind P700, the primary electron donor of photosystem I (PSI), as well as the electron acceptors A0, A1 and FX. PSI is a plastocyanin/cytochrome c6-ferredoxin oxidoreductase, converting photonic excitation into a charge separation, which transfers an electron from the donor P700 chlorophyll pair to the spectroscopically characterized acceptors A0, A1, FX, FA and FB in turn. Oxidized P700 is reduced on the lumenal side of the thylakoid membrane by plastocyanin or cytochrome c6. This Synechococcus sp. (strain JA-2-3B'a(2-13)) (Cyanobacteria bacterium Yellowstone B-Prime) protein is Photosystem I P700 chlorophyll a apoprotein A2.